A 104-amino-acid polypeptide reads, in one-letter code: MLRRETSTIYRTHKKSNSSILRSQRDQTRVDSLVEESPMGDFGINNQPTQPGVIYYFVELTNLGIQENTSSNNNNNNNHGDDENGSRYGHGSSLGGDVHSRRCS.

Disordered regions lie at residues 1–48 (MLRR…NNQP) and 66–104 (QENTSSNNNNNNNHGDDENGSRYGHGSSLGGDVHSRRCS).

This is an uncharacterized protein from Saccharomyces cerevisiae (strain ATCC 204508 / S288c) (Baker's yeast).